A 258-amino-acid chain; its full sequence is MTSRMPLMAGNWKMNLNHLEAIAHVQKLAFALADKDYEACEVAVLPPYTDLRSVQTLVDGDKLKIKYGAQDVSAHDSGAYTGEISGSMLAKLKCTYVAVGHSERRQYHHETDEIVNAKVKASFRHGLIPILCVGEELEVREAGNHVTHTLTQVEGGLKDVPAEQAETIVIAYEPVWAIGTGKVCGADDAQEVCAAIRAKLAELYSQELADQVRIQYGGSVKSGNVAEIMAKPDIDGALVGGASLDADEFVKIARFRDQ.

11–13 (NWK) contributes to the substrate binding site. The active-site Electrophile is the histidine 101. The active-site Proton acceptor is glutamate 173. Substrate contacts are provided by residues glycine 179, serine 219, and 240–241 (GG).

The protein belongs to the triosephosphate isomerase family. As to quaternary structure, homodimer.

The protein resides in the cytoplasm. The catalysed reaction is D-glyceraldehyde 3-phosphate = dihydroxyacetone phosphate. It participates in carbohydrate biosynthesis; gluconeogenesis. The protein operates within carbohydrate degradation; glycolysis; D-glyceraldehyde 3-phosphate from glycerone phosphate: step 1/1. Its function is as follows. Involved in the gluconeogenesis. Catalyzes stereospecifically the conversion of dihydroxyacetone phosphate (DHAP) to D-glyceraldehyde-3-phosphate (G3P). This chain is Triosephosphate isomerase, found in Streptomyces avermitilis (strain ATCC 31267 / DSM 46492 / JCM 5070 / NBRC 14893 / NCIMB 12804 / NRRL 8165 / MA-4680).